The chain runs to 87 residues: Small ribosomal subunit protein bS16 (87 aa).

Belongs to the bacterial ribosomal protein bS16 family.

The polypeptide is Small ribosomal subunit protein bS16 (Fusobacterium nucleatum subsp. nucleatum (strain ATCC 25586 / DSM 15643 / BCRC 10681 / CIP 101130 / JCM 8532 / KCTC 2640 / LMG 13131 / VPI 4355)).